Here is a 504-residue protein sequence, read N- to C-terminus: Probable cytosol aminopeptidase (504 aa).

Lys263 and Asp268 together coordinate Mn(2+). The active site involves Lys275. The Mn(2+) site is built by Asp286, Asp345, and Glu347. Arg349 is a catalytic residue.

It belongs to the peptidase M17 family. It depends on Mn(2+) as a cofactor.

It localises to the cytoplasm. The catalysed reaction is Release of an N-terminal amino acid, Xaa-|-Yaa-, in which Xaa is preferably Leu, but may be other amino acids including Pro although not Arg or Lys, and Yaa may be Pro. Amino acid amides and methyl esters are also readily hydrolyzed, but rates on arylamides are exceedingly low.. The enzyme catalyses Release of an N-terminal amino acid, preferentially leucine, but not glutamic or aspartic acids.. Functionally, presumably involved in the processing and regular turnover of intracellular proteins. Catalyzes the removal of unsubstituted N-terminal amino acids from various peptides. The polypeptide is Probable cytosol aminopeptidase (Sulfurihydrogenibium sp. (strain YO3AOP1)).